A 184-amino-acid polypeptide reads, in one-letter code: UPF0397 protein SAOUHSC_03020 (184 aa).

A run of 5 helical transmembrane segments spans residues 11-31 (VVAIGIGAAVFVILGRFVVIP), 44-64 (AFLALISAIFGPFAGLMTGLV), 77-97 (AWWSWVICSGIIGCLYGWIGL), 116-136 (IGQIIANIICWALIAPTLDIL), and 148-168 (QGVISAVLNIISVGIIGTILL).

Belongs to the UPF0397 family.

The protein resides in the cell membrane. In Staphylococcus aureus (strain NCTC 8325 / PS 47), this protein is UPF0397 protein SAOUHSC_03020.